The sequence spans 251 residues: Ribosome maturation factor RimP (251 aa).

The segment at 176–251 is disordered; it reads SLRRGSAPPQ…ARLKNRDTLH (76 aa). Residues 186–196 are compositionally biased toward acidic residues; the sequence is DGEEGDEEEGA. The span at 216 to 226 shows a compositional bias: basic and acidic residues; sequence PKLDKKSDKPV.

The protein belongs to the RimP family.

It is found in the cytoplasm. Required for maturation of 30S ribosomal subunits. This chain is Ribosome maturation factor RimP, found in Methylorubrum extorquens (strain PA1) (Methylobacterium extorquens).